The following is a 36-amino-acid chain: U-limacoditoxin(7)-Dv63 (36 aa).

Residues 1-19 (MFKPRVILLITIIAVFSEF) form the signal peptide.

Belongs to the limacoditoxin-7 family. As to expression, expressed by the venom secretory cell of the spine. The spine is a cuticular structure containing a single large nucleated venom-secreting cell at its base. It is an independent unit capable of producing, storing and injecting venom. On the back of D.vulnerans caterpillars, spines are grouped together by 50 to 100 to form scoli, of which there are eight in D.vulnerans.

Its subcellular location is the secreted. In terms of biological role, peptide with insecticidal and antiparasitic activities. Induces irreversible paralysis in D.melanogaster when tested at high doses. It shows a moderate antiparasitic activity against the major pathogenic nematode of ruminants (H.contortus, EC(50)=41.3 uM). Does not show antimicrobial activities. Does not induce increase in intracellular calcium in mouse DRG neurons, suggesting that it does not induce pain. This chain is U-limacoditoxin(7)-Dv63, found in Doratifera vulnerans (Mottled cup moth).